Here is a 158-residue protein sequence, read N- to C-terminus: Endoribonuclease YbeY (158 aa).

Zn(2+) is bound by residues H118, H122, and H128.

Belongs to the endoribonuclease YbeY family. The cofactor is Zn(2+).

The protein localises to the cytoplasm. Functionally, single strand-specific metallo-endoribonuclease involved in late-stage 70S ribosome quality control and in maturation of the 3' terminus of the 16S rRNA. In Bartonella quintana (strain Toulouse) (Rochalimaea quintana), this protein is Endoribonuclease YbeY.